We begin with the raw amino-acid sequence, 101 residues long: Large ribosomal subunit protein uL23 (101 aa).

Belongs to the universal ribosomal protein uL23 family. Part of the 50S ribosomal subunit. Contacts protein L29, and trigger factor when it is bound to the ribosome.

Its function is as follows. One of the early assembly proteins it binds 23S rRNA. One of the proteins that surrounds the polypeptide exit tunnel on the outside of the ribosome. Forms the main docking site for trigger factor binding to the ribosome. This Trichodesmium erythraeum (strain IMS101) protein is Large ribosomal subunit protein uL23.